The primary structure comprises 754 residues: Lysophospholipase 3 (754 aa).

Positions 1–19 (MKVNLKLIIGSILISQAQA) are cleaved as a signal peptide. 2 stretches are compositionally biased toward low complexity: residues 25–40 (SSGSSSSSDSSPSETG) and 50–88 (LFGSGSSLTQSSSAQASSTKSTSDSASSTDSSLFSSSNS). Residues 25-88 (SSGSSSSSDS…DSSLFSSSNS (64 aa)) form a disordered region. N-linked (GlcNAc...) asparagine glycans are attached at residues N112, N156, N174, N317, N325, N354, N391, N423, N470, N510, N515, N560, N577, N597, N625, and N631. Residues 114-670 (TCPSKKTFIR…QEYCWTGGFK (557 aa)) enclose the PLA2c domain. A compositionally biased stretch (low complexity) spans 687-721 (KTHTSGGTSSTTQQTSTTTGSSANGGSSSTGSSSS). The segment at 687–727 (KTHTSGGTSSTTQQTSTTTGSSANGGSSSTGSSSSSKKKNG) is disordered.

The protein belongs to the lysophospholipase family.

It localises to the secreted. The enzyme catalyses a 1-acyl-sn-glycero-3-phosphocholine + H2O = sn-glycerol 3-phosphocholine + a fatty acid + H(+). Catalyzes the release of fatty acids from lysophospholipids. Phospholipase B may well contribute to pathogenicity by abetting the fungus in damaging and traversing host cell membranes, processes which likely increase the rapidity of disseminated infection. The polypeptide is Lysophospholipase 3 (PLB3) (Candida albicans (Yeast)).